The sequence spans 430 residues: Phosphomethylpyrimidine synthase (430 aa).

Residues Asn-67, Met-96, Tyr-125, His-161, 183–185, 224–227, and Glu-263 each bind substrate; these read SRG and DALR. Residue His-267 participates in Zn(2+) binding. Tyr-290 provides a ligand contact to substrate. A Zn(2+)-binding site is contributed by His-331. [4Fe-4S] cluster is bound by residues Cys-406, Cys-409, and Cys-413.

It belongs to the ThiC family. Homodimer. The cofactor is [4Fe-4S] cluster.

The catalysed reaction is 5-amino-1-(5-phospho-beta-D-ribosyl)imidazole + S-adenosyl-L-methionine = 4-amino-2-methyl-5-(phosphooxymethyl)pyrimidine + CO + 5'-deoxyadenosine + formate + L-methionine + 3 H(+). The protein operates within cofactor biosynthesis; thiamine diphosphate biosynthesis. In terms of biological role, catalyzes the synthesis of the hydroxymethylpyrimidine phosphate (HMP-P) moiety of thiamine from aminoimidazole ribotide (AIR) in a radical S-adenosyl-L-methionine (SAM)-dependent reaction. This chain is Phosphomethylpyrimidine synthase, found in Campylobacter jejuni subsp. jejuni serotype O:23/36 (strain 81-176).